We begin with the raw amino-acid sequence, 234 residues long: MDALIKPLRAGKPDAKPADPKGTEFRPAELDPAEFLAAAVKPDQPRPSRGEAEQAVKTLLAYIGEDTAREGLLDTPRRVVEAYDELFQGYHQCPAEVLNRTFGETAGYDDFVLIRDMSFTSHCEHHVMPFYGKAHIAYTPVERVVGLSKLARLVDIFAHRLQTQEHLTAQIAAAVDEVLKPRGVAVMIEAEHTCMSVRGIAKQGAVTFTSRFTGMFRDNPAEQARFMSMIRGGR.

The tract at residues 1 to 26 (MDALIKPLRAGKPDAKPADPKGTEFR) is disordered. Basic and acidic residues predominate over residues 11–26 (GKPDAKPADPKGTEFR). Zn(2+) contacts are provided by Cys123, His126, and Cys194.

Belongs to the GTP cyclohydrolase I family. Toroid-shaped homodecamer, composed of two pentamers of five dimers.

It catalyses the reaction GTP + H2O = 7,8-dihydroneopterin 3'-triphosphate + formate + H(+). It functions in the pathway cofactor biosynthesis; 7,8-dihydroneopterin triphosphate biosynthesis; 7,8-dihydroneopterin triphosphate from GTP: step 1/1. The chain is GTP cyclohydrolase 1 from Rhodopseudomonas palustris (strain BisB18).